Here is a 197-residue protein sequence, read N- to C-terminus: Segregation and condensation protein B (197 aa).

The protein belongs to the ScpB family. In terms of assembly, homodimer. Homodimerization may be required to stabilize the binding of ScpA to the Smc head domains. Component of a cohesin-like complex composed of ScpA, ScpB and the Smc homodimer, in which ScpA and ScpB bind to the head domain of Smc. The presence of the three proteins is required for the association of the complex with DNA.

The protein localises to the cytoplasm. Its function is as follows. Participates in chromosomal partition during cell division. May act via the formation of a condensin-like complex containing Smc and ScpA that pull DNA away from mid-cell into both cell halves. The polypeptide is Segregation and condensation protein B (Syntrophotalea carbinolica (strain DSM 2380 / NBRC 103641 / GraBd1) (Pelobacter carbinolicus)).